Here is a 320-residue protein sequence, read N- to C-terminus: Acetyl-coenzyme A carboxylase carboxyl transferase subunit alpha (320 aa).

The region spanning 41-295 (SIEEKAAQAL…GDAIAGALND (255 aa)) is the CoA carboxyltransferase C-terminal domain.

It belongs to the AccA family. As to quaternary structure, acetyl-CoA carboxylase is a heterohexamer composed of biotin carboxyl carrier protein (AccB), biotin carboxylase (AccC) and two subunits each of ACCase subunit alpha (AccA) and ACCase subunit beta (AccD).

The protein resides in the cytoplasm. The catalysed reaction is N(6)-carboxybiotinyl-L-lysyl-[protein] + acetyl-CoA = N(6)-biotinyl-L-lysyl-[protein] + malonyl-CoA. It functions in the pathway lipid metabolism; malonyl-CoA biosynthesis; malonyl-CoA from acetyl-CoA: step 1/1. Its function is as follows. Component of the acetyl coenzyme A carboxylase (ACC) complex. First, biotin carboxylase catalyzes the carboxylation of biotin on its carrier protein (BCCP) and then the CO(2) group is transferred by the carboxyltransferase to acetyl-CoA to form malonyl-CoA. The polypeptide is Acetyl-coenzyme A carboxylase carboxyl transferase subunit alpha (Nitrobacter winogradskyi (strain ATCC 25391 / DSM 10237 / CIP 104748 / NCIMB 11846 / Nb-255)).